A 659-amino-acid polypeptide reads, in one-letter code: Cytochrome bo(3) ubiquinol oxidase subunit 1 (659 aa).

Residues 1-14 are Extracellular-facing; sequence MFGKLTLKAIPVDE. Residues 15-35 form a helical membrane-spanning segment; it reads PIIMVTYISIILIALFISFSI. The Cytoplasmic segment spans residues 36–58; it reads TYFKKWKYLWYEWFTTVDHKKIS. The helical transmembrane segment at 59–79 threads the bilayer; sequence IMYGILAFIMLFRGFVDAILM. A ubiquinone is bound by residues Arg-71, Asp-75, and His-98. Topologically, residues 80-106 are extracellular; that stretch reads RTQQVIASSGNTGFLPPHHYDQIFTAH. His-106 provides a ligand contact to heme b. A helical transmembrane segment spans residues 107–127; the sequence is GVIMIFFVAMPLVIGLMNLVV. Residues 128-145 are Cytoplasmic-facing; the sequence is PLQIGARDVAFPFLNNLS. Residues 146–166 form a helical membrane-spanning segment; the sequence is FWLNVSGAILLTLSLGIGEFA. The Extracellular portion of the chain corresponds to 167–189; it reads QTGWLAYPPLSEVKYSPGVGVDY. Residue Trp-170 participates in heme b binding. Residues 190–210 form a helical membrane-spanning segment; the sequence is WIWSLQISGVGTTLTGINFLI. Over 211–225 the chain is Cytoplasmic; it reads TILKMRAPGMCFFKM. Residues 226 to 246 traverse the membrane as a helical segment; that stretch reads PVFTWAALCTNILIVISFPVL. The Extracellular portion of the chain corresponds to 247-277; the sequence is TTTLLLLTLDRCFDFHFFTNNFGGNPMMYVN. A helical membrane pass occupies residues 278-298; sequence LIWIWGHPEVYILVLPVFGVF. A Cu(2+)-binding site is contributed by His-284. Positions 284 to 288 form a cross-link, 1'-histidyl-3'-tyrosine (His-Tyr); the sequence is HPEVY. Fe(II)-heme o is bound at residue Tyr-288. Topologically, residues 299 to 309 are cytoplasmic; sequence SEVVATFSKKR. A helical transmembrane segment spans residues 310–330; that stretch reads LFGYVSLVWATLAITILSFIV. Over 331-347 the chain is Extracellular; it reads WLHHFFTMGAGSNVNAF. Residues His-333 and His-334 each coordinate Cu(2+). A helical membrane pass occupies residues 348–368; that stretch reads FGITTMIIAIPTGVKIFNWLF. The Cytoplasmic segment spans residues 369–380; that stretch reads TMYQGRVHMHSS. The chain crosses the membrane as a helical span at residues 381–401; it reads MLWTIGFLITFSIGGMTGVLL. Over 402 to 413 the chain is Extracellular; the sequence is SIPPADFILHNS. Positions 411 and 419 each coordinate Fe(II)-heme o. The helical transmembrane segment at 414-434 threads the bilayer; sequence LFLVAHFHNVIIGGVVFGCFA. His-421 is a binding site for heme b. Residues 435-456 are Cytoplasmic-facing; sequence GINYWFPKLFGFILNELWGKRA. Residues 457 to 477 traverse the membrane as a helical segment; the sequence is FWFWIIGFFTAFMPLYFLGFM. Residues 478–490 lie on the Extracellular side of the membrane; it reads GMTRRLSQNIDIE. Residues Arg-481 and Arg-482 each coordinate heme b. The helical transmembrane segment at 491 to 511 threads the bilayer; that stretch reads FHFLLSIAAIGAILIGIGILC. Over 512–580 the chain is Cytoplasmic; it reads QIIQFWVSVR…KNQVQKKQYS (69 aa). The helical transmembrane segment at 581–601 threads the bilayer; that stretch reads AIHMPKNTGLGIFISFFSLLF. At 602 to 605 the chain is on the extracellular side; that stretch reads GFSA. Residues 606 to 626 traverse the membrane as a helical segment; that stretch reads VWNIIWLSFLSFLVVIISLIF. The Cytoplasmic portion of the chain corresponds to 627 to 659; it reads KSIDENTEYTVSVKEIESIENRHLENVQKAGLK.

Belongs to the heme-copper respiratory oxidase family. In terms of assembly, the cytochrome bo(3) ubiquinol oxidase complex is a heterooctamer of two A chains, two B chains, two C chains and two D chains. The cofactor is Cu(2+). Requires heme b as cofactor. Fe(II)-heme o is required as a cofactor.

The protein localises to the cell membrane. It catalyses the reaction 2 a ubiquinol + O2 + n H(+)(in) = 2 a ubiquinone + 2 H2O + n H(+)(out). Functionally, cytochrome bo(3) ubiquinol oxidase is the terminal enzyme in the aerobic respiratory chain. Catalyzes the four-electron reduction of O2 to water, using a ubiquinol as a membrane soluble electron donor for molecular oxygen reduction. Has proton pump activity across the membrane in addition to electron transfer, pumping 2 protons/electron and generating a proton motive force. All the redox centers of this enzyme complex are located within the largest subunit, subunit I. Protons are probably pumped via D- and K- channels found in this subunit. The chain is Cytochrome bo(3) ubiquinol oxidase subunit 1 (cyoB) from Buchnera aphidicola subsp. Schizaphis graminum (strain Sg).